The chain runs to 60 residues: UPF0181 protein ESA_01442 (60 aa).

This sequence belongs to the UPF0181 family.

This is UPF0181 protein ESA_01442 from Cronobacter sakazakii (strain ATCC BAA-894) (Enterobacter sakazakii).